We begin with the raw amino-acid sequence, 414 residues long: tRNA methyltransferase 10 homolog C (414 aa).

A mitochondrion-targeting transit peptide spans 1-35 (MNVTVRFLRPFARYLVPYTFHRTRSNSYSRVLQRY). S79 carries the post-translational modification Phosphoserine. Residues 133 to 162 (GKEMMKKAKQMKKEMKAAAREEAKRARSLE) adopt a coiled-coil conformation. Positions 186–378 (LGWKGVQAMQ…KFVPRRKHTG (193 aa)) constitute an SAM-dependent MTase TRM10-type domain.

It belongs to the class IV-like SAM-binding methyltransferase superfamily. TRM10 family. In terms of assembly, component of mitochondrial ribonuclease P, a complex composed of TRMT10C/MRPP1, HSD17B10/MRPP2 and PRORP/MRPP3. Interacts with HSD17B10/MRPP2; forming the MRPP1-MRPP2 subcomplex of the mitochondrial ribonuclease P complex. Interacts with GRSF1.

The protein resides in the mitochondrion matrix. It is found in the mitochondrion nucleoid. The enzyme catalyses adenosine(9) in tRNA + S-adenosyl-L-methionine = N(1)-methyladenosine(9) in tRNA + S-adenosyl-L-homocysteine + H(+). It carries out the reaction guanosine(9) in tRNA + S-adenosyl-L-methionine = N(1)-methylguanosine(9) in tRNA + S-adenosyl-L-homocysteine + H(+). The catalysed reaction is an adenosine in mRNA + S-adenosyl-L-methionine = an N(1)-methyladenosine in mRNA + S-adenosyl-L-homocysteine + H(+). In terms of biological role, mitochondrial tRNA N(1)-methyltransferase involved in mitochondrial tRNA maturation. Component of mitochondrial ribonuclease P, a complex composed of TRMT10C/MRPP1, HSD17B10/MRPP2 and PRORP/MRPP3, which cleaves tRNA molecules in their 5'-ends. Together with HSD17B10/MRPP2, forms a subcomplex of the mitochondrial ribonuclease P, named MRPP1-MRPP2 subcomplex, which displays functions that are independent of the ribonuclease P activity. The MRPP1-MRPP2 subcomplex catalyzes the formation of N(1)-methylguanine and N(1)-methyladenine at position 9 (m1G9 and m1A9, respectively) in tRNAs; TRMT10C/MRPP1 acting as the catalytic N(1)-methyltransferase subunit. The MRPP1-MRPP2 subcomplex also acts as a tRNA maturation platform: following 5'-end cleavage by the mitochondrial ribonuclease P complex, the MRPP1-MRPP2 subcomplex enhances the efficiency of 3'-processing catalyzed by ELAC2, retains the tRNA product after ELAC2 processing and presents the nascent tRNA to the mitochondrial CCA tRNA nucleotidyltransferase TRNT1 enzyme. In addition to tRNA N(1)-methyltransferase activity, TRMT10C/MRPP1 also acts as a mRNA N(1)-methyltransferase by mediating methylation of adenosine residues at the N(1) position of MT-ND5 mRNA. Associates with mitochondrial DNA complexes at the nucleoids to initiate RNA processing and ribosome assembly. The chain is tRNA methyltransferase 10 homolog C from Rattus norvegicus (Rat).